Reading from the N-terminus, the 161-residue chain is Lipoprotein signal peptidase (161 aa).

Helical transmembrane passes span 4–24 (LLVVYFLISALLVGLDQWSKY), 61–81 (KMIFFYVITVIVSVVIIYLLI), and 87–107 (SIWYSVGLSFVLAGAIGNFID). Active-site residues include Asp116 and Asp132. Residues 127–147 (IFNVADSTLVVGVICIFIYLI) traverse the membrane as a helical segment.

This sequence belongs to the peptidase A8 family.

The protein localises to the cell membrane. The catalysed reaction is Release of signal peptides from bacterial membrane prolipoproteins. Hydrolyzes -Xaa-Yaa-Zaa-|-(S,diacylglyceryl)Cys-, in which Xaa is hydrophobic (preferably Leu), and Yaa (Ala or Ser) and Zaa (Gly or Ala) have small, neutral side chains.. It functions in the pathway protein modification; lipoprotein biosynthesis (signal peptide cleavage). In terms of biological role, this protein specifically catalyzes the removal of signal peptides from prolipoproteins. This is Lipoprotein signal peptidase from Enterococcus faecalis (strain ATCC 700802 / V583).